A 308-amino-acid polypeptide reads, in one-letter code: Aspartate carbamoyltransferase catalytic subunit (308 aa).

Residues Arg59 and Thr60 each contribute to the carbamoyl phosphate site. Lys87 is an L-aspartate binding site. The carbamoyl phosphate site is built by Arg109, His137, and Gln140. L-aspartate-binding residues include Arg173 and Arg224. Gly267 and Pro268 together coordinate carbamoyl phosphate.

The protein belongs to the aspartate/ornithine carbamoyltransferase superfamily. ATCase family. As to quaternary structure, heterododecamer (2C3:3R2) of six catalytic PyrB chains organized as two trimers (C3), and six regulatory PyrI chains organized as three dimers (R2).

It carries out the reaction carbamoyl phosphate + L-aspartate = N-carbamoyl-L-aspartate + phosphate + H(+). It functions in the pathway pyrimidine metabolism; UMP biosynthesis via de novo pathway; (S)-dihydroorotate from bicarbonate: step 2/3. Functionally, catalyzes the condensation of carbamoyl phosphate and aspartate to form carbamoyl aspartate and inorganic phosphate, the committed step in the de novo pyrimidine nucleotide biosynthesis pathway. This chain is Aspartate carbamoyltransferase catalytic subunit, found in Helicobacter acinonychis (strain Sheeba).